A 339-amino-acid polypeptide reads, in one-letter code: Isopentenyl-diphosphate delta-isomerase (339 aa).

A substrate-binding site is contributed by 7 to 8 (RK). FMN-binding positions include serine 65, 66-68 (SMT), serine 96, and asparagine 125. 96-98 (SQR) contributes to the substrate binding site. Glutamine 160 is a substrate binding site. Mg(2+) is bound at residue glutamate 161. FMN contacts are provided by residues lysine 192, threonine 222, and 293 to 294 (AG).

Belongs to the IPP isomerase type 2 family. As to quaternary structure, homooctamer. Dimer of tetramers. FMN serves as cofactor. The cofactor is NADPH. Mg(2+) is required as a cofactor.

The protein localises to the cytoplasm. The catalysed reaction is isopentenyl diphosphate = dimethylallyl diphosphate. Functionally, involved in the biosynthesis of isoprenoids. Catalyzes the 1,3-allylic rearrangement of the homoallylic substrate isopentenyl (IPP) to its allylic isomer, dimethylallyl diphosphate (DMAPP). This Vibrio parahaemolyticus serotype O3:K6 (strain RIMD 2210633) protein is Isopentenyl-diphosphate delta-isomerase.